A 419-amino-acid chain; its full sequence is UDP-N-acetylglucosamine 1-carboxyvinyltransferase 1 (419 aa).

Phosphoenolpyruvate is bound at residue 22-23 (KN). Position 92 (R92) interacts with UDP-N-acetyl-alpha-D-glucosamine. The active-site Proton donor is C116. C116 carries the post-translational modification 2-(S-cysteinyl)pyruvic acid O-phosphothioketal. UDP-N-acetyl-alpha-D-glucosamine-binding positions include 121-125 (RPIDL), D306, and I328.

Belongs to the EPSP synthase family. MurA subfamily.

It localises to the cytoplasm. The enzyme catalyses phosphoenolpyruvate + UDP-N-acetyl-alpha-D-glucosamine = UDP-N-acetyl-3-O-(1-carboxyvinyl)-alpha-D-glucosamine + phosphate. Its pathway is cell wall biogenesis; peptidoglycan biosynthesis. Functionally, cell wall formation. Adds enolpyruvyl to UDP-N-acetylglucosamine. This Streptococcus agalactiae serotype Ia (strain ATCC 27591 / A909 / CDC SS700) protein is UDP-N-acetylglucosamine 1-carboxyvinyltransferase 1.